Consider the following 181-residue polypeptide: Crossover junction endodeoxyribonuclease RuvC (181 aa).

Residues D7, E67, and D139 contribute to the active site. Residues D7, E67, and D139 each coordinate Mg(2+).

This sequence belongs to the RuvC family. In terms of assembly, homodimer which binds Holliday junction (HJ) DNA. The HJ becomes 2-fold symmetrical on binding to RuvC with unstacked arms; it has a different conformation from HJ DNA in complex with RuvA. In the full resolvosome a probable DNA-RuvA(4)-RuvB(12)-RuvC(2) complex forms which resolves the HJ. The cofactor is Mg(2+).

The protein resides in the cytoplasm. The catalysed reaction is Endonucleolytic cleavage at a junction such as a reciprocal single-stranded crossover between two homologous DNA duplexes (Holliday junction).. Functionally, the RuvA-RuvB-RuvC complex processes Holliday junction (HJ) DNA during genetic recombination and DNA repair. Endonuclease that resolves HJ intermediates. Cleaves cruciform DNA by making single-stranded nicks across the HJ at symmetrical positions within the homologous arms, yielding a 5'-phosphate and a 3'-hydroxyl group; requires a central core of homology in the junction. The consensus cleavage sequence is 5'-(A/T)TT(C/G)-3'. Cleavage occurs on the 3'-side of the TT dinucleotide at the point of strand exchange. HJ branch migration catalyzed by RuvA-RuvB allows RuvC to scan DNA until it finds its consensus sequence, where it cleaves and resolves the cruciform DNA. The sequence is that of Crossover junction endodeoxyribonuclease RuvC from Cupriavidus necator (strain ATCC 17699 / DSM 428 / KCTC 22496 / NCIMB 10442 / H16 / Stanier 337) (Ralstonia eutropha).